Here is a 112-residue protein sequence, read N- to C-terminus: Nitrogen regulatory protein P-II (112 aa).

At tyrosine 51 the chain carries O-UMP-tyrosine.

Belongs to the P(II) protein family. In terms of assembly, homotrimer.

In terms of biological role, P-II indirectly controls the transcription of the glutamine synthetase gene (glnA). P-II prevents NR-II-catalyzed conversion of NR-I to NR-I-phosphate, the transcriptional activator of glnA. When P-II is uridylylated to P-II-UMP, these events are reversed. When the ratio of Gln to 2-ketoglutarate decreases, P-II is uridylylated to P-II-UMP, which causes the deadenylation of glutamine synthetase, so activating the enzyme. In Rhodobacter capsulatus (Rhodopseudomonas capsulata), this protein is Nitrogen regulatory protein P-II (glnB).